Reading from the N-terminus, the 334-residue chain is Phosphate acyltransferase (334 aa).

The protein belongs to the PlsX family. Homodimer. Probably interacts with PlsY.

It localises to the cytoplasm. The catalysed reaction is a fatty acyl-[ACP] + phosphate = an acyl phosphate + holo-[ACP]. The protein operates within lipid metabolism; phospholipid metabolism. Functionally, catalyzes the reversible formation of acyl-phosphate (acyl-PO(4)) from acyl-[acyl-carrier-protein] (acyl-ACP). This enzyme utilizes acyl-ACP as fatty acyl donor, but not acyl-CoA. The chain is Phosphate acyltransferase from Acholeplasma laidlawii (strain PG-8A).